Consider the following 1177-residue polypeptide: DNA-directed RNA polymerase subunit beta (1177 aa).

Over residues 1147 to 1161 (DDTEIEMRDTEDDDD) the composition is skewed to acidic residues. The interval 1147–1177 (DDTEIEMRDTEDDDDHQSADKLNVEVETTKE) is disordered. Positions 1162 to 1177 (HQSADKLNVEVETTKE) are enriched in basic and acidic residues.

This sequence belongs to the RNA polymerase beta chain family. The RNAP catalytic core consists of 2 alpha, 1 beta, 1 beta' and 1 omega subunit. When a sigma factor is associated with the core the holoenzyme is formed, which can initiate transcription.

It carries out the reaction RNA(n) + a ribonucleoside 5'-triphosphate = RNA(n+1) + diphosphate. In terms of biological role, DNA-dependent RNA polymerase catalyzes the transcription of DNA into RNA using the four ribonucleoside triphosphates as substrates. This chain is DNA-directed RNA polymerase subunit beta, found in Bacillus cereus (strain G9842).